Reading from the N-terminus, the 781-residue chain is Aconitate hydratase, mitochondrial (781 aa).

The N-terminal 27 residues, 1-27 (MAPYSLLVTRLQKALGVRQYHVASVLC), are a transit peptide targeting the mitochondrion. Gln28 carries the pyrrolidone carboxylic acid modification. Residue Lys31 is modified to N6-succinyllysine. Lys50 is subject to N6-acetyllysine; alternate. N6-succinyllysine; alternate is present on Lys50. Gln99 contributes to the substrate binding site. N6-acetyllysine; alternate is present on residues Lys138 and Lys144. An N6-succinyllysine; alternate mark is found at Lys138 and Lys144. A substrate-binding site is contributed by 192–194 (DSH). Lys233 carries the post-translational modification N6-acetyllysine; alternate. Lys233 carries the post-translational modification N6-succinyllysine; alternate. [4Fe-4S] cluster is bound at residue Cys385. Lys411 carries the N6-succinyllysine modification. [4Fe-4S] cluster-binding residues include Cys448 and Cys451. Residues Arg474 and Arg479 each coordinate substrate. N6-acetyllysine; alternate is present on residues Lys517 and Lys523. An N6-succinyllysine; alternate mark is found at Lys517 and Lys523. Residues 524-537 (LEAPDADELPRAEF) are compositionally biased toward basic and acidic residues. Positions 524 to 561 (LEAPDADELPRAEFDPGQDTYQHPPKDSSGQRVDVSPT) are disordered. Lys549 is modified (N6-succinyllysine). Positions 551–561 (SSGQRVDVSPT) are enriched in polar residues. Ser559 is modified (phosphoserine). Lys573 is subject to N6-acetyllysine; alternate. N6-succinyllysine; alternate is present on Lys573. N6-succinyllysine is present on residues Lys577 and Lys591. N6-acetyllysine; alternate is present on Lys605. Lys605 carries the N6-succinyllysine; alternate modification. Position 607 (Arg607) interacts with substrate. Position 628 is an N6-succinyllysine (Lys628). Ser670 carries the post-translational modification Phosphoserine. 670–671 (SR) contacts substrate. Lys689 bears the N6-succinyllysine mark. Lys723 and Lys730 each carry N6-acetyllysine; alternate. N6-succinyllysine; alternate occurs at positions 723 and 730. 3 positions are modified to N6-acetyllysine: Lys736, Lys739, and Lys743.

The protein belongs to the aconitase/IPM isomerase family. Monomer. Requires [4Fe-4S] cluster as cofactor. Forms covalent cross-links mediated by transglutaminase TGM2, between a glutamine and the epsilon-amino group of a lysine residue, forming homopolymers and heteropolymers.

The protein localises to the mitochondrion. The catalysed reaction is citrate = D-threo-isocitrate. It functions in the pathway carbohydrate metabolism; tricarboxylic acid cycle; isocitrate from oxaloacetate: step 2/2. Functionally, catalyzes the isomerization of citrate to isocitrate via cis-aconitate. The protein is Aconitate hydratase, mitochondrial (ACO2) of Sus scrofa (Pig).